A 584-amino-acid chain; its full sequence is DNA mismatch repair protein MutL (584 aa).

It belongs to the DNA mismatch repair MutL/HexB family.

Functionally, this protein is involved in the repair of mismatches in DNA. It is required for dam-dependent methyl-directed DNA mismatch repair. May act as a 'molecular matchmaker', a protein that promotes the formation of a stable complex between two or more DNA-binding proteins in an ATP-dependent manner without itself being part of a final effector complex. This is DNA mismatch repair protein MutL from Buchnera aphidicola subsp. Acyrthosiphon pisum (strain 5A).